A 348-amino-acid polypeptide reads, in one-letter code: MO25-like protein At2g03410 (348 aa).

Belongs to the Mo25 family.

In Arabidopsis thaliana (Mouse-ear cress), this protein is MO25-like protein At2g03410.